The chain runs to 529 residues: Ectonucleoside triphosphate diphosphohydrolase 3 (529 aa).

Topologically, residues 1–22 are cytoplasmic; sequence MFTVLTRQPCEQAGLKALYRTP. Residues 23 to 43 form a helical membrane-spanning segment; sequence TIIALVVLLVSIVVLVSITVI. Residues 44–485 lie on the Extracellular side of the membrane; it reads QIHKQEVLPP…PLIRLPIEPP (442 aa). Asn81 carries an N-linked (GlcNAc...) asparagine glycan. Cys92 and Cys116 are joined by a disulfide. Asn149 carries an N-linked (GlcNAc...) asparagine glycan. Residue Glu182 is the Proton acceptor of the active site. Residue 222-226 participates in ATP binding; it reads GASTQ. The N-linked (GlcNAc...) asparagine glycan is linked to Asn238. Intrachain disulfides connect Cys261–Cys308, Cys289–Cys334, and Cys347–Cys353. N-linked (GlcNAc...) asparagine glycans are attached at residues Asn381, Asn392, Asn402, and Asn454. An intrachain disulfide couples Cys399 to Cys422. Residues 486 to 506 traverse the membrane as a helical segment; it reads VFVGTLAFFTAAALLCLAFLA. Topologically, residues 507-529 are cytoplasmic; the sequence is YLCSATRRKRHSEHAFDHAVDSD.

The protein belongs to the GDA1/CD39 NTPase family. The cofactor is Ca(2+). Mg(2+) serves as cofactor. In terms of tissue distribution, expressed in adult brain, pancreas, spleen and prostate. Moderate or low expression is seen in most tissues. Not expressed in liver and peripheral blood leukocytes.

It is found in the cell membrane. The catalysed reaction is a ribonucleoside 5'-triphosphate + 2 H2O = a ribonucleoside 5'-phosphate + 2 phosphate + 2 H(+). Its function is as follows. Has a threefold preference for the hydrolysis of ATP over ADP. This Homo sapiens (Human) protein is Ectonucleoside triphosphate diphosphohydrolase 3 (ENTPD3).